The chain runs to 44 residues: Mu-conotoxin-like Cal 12.1.1e (44 aa).

Disulfide bonds link Cys-3–Cys-16, Cys-11–Cys-28, Cys-18–Cys-33, and Cys-27–Cys-38. A 6'-bromotryptophan modification is found at Trp-17. Residue Pro-23 is modified to 4-hydroxyproline. Residues Trp-36 and Trp-37 each carry the 6'-bromotryptophan modification. Pro-39 carries the post-translational modification 4-hydroxyproline. Trp-43 is subject to 6'-bromotryptophan.

In terms of tissue distribution, expressed by the venom duct.

The protein resides in the secreted. Mu-conotoxins block voltage-gated sodium channels. This toxin reversibly blocks voltage-gated sodium channel in cephalopods, with no alteration in the voltage dependence of sodium conductance or on the kinetics of inactivation. This chain is Mu-conotoxin-like Cal 12.1.1e, found in Californiconus californicus (California cone).